The sequence spans 145 residues: Flagellar assembly factor FliW (145 aa).

The protein belongs to the FliW family. As to quaternary structure, interacts with translational regulator CsrA and flagellin(s).

The protein resides in the cytoplasm. In terms of biological role, acts as an anti-CsrA protein, binds CsrA and prevents it from repressing translation of its target genes, one of which is flagellin. Binds to flagellin and participates in the assembly of the flagellum. The protein is Flagellar assembly factor FliW of Clostridium kluyveri (strain NBRC 12016).